A 100-amino-acid chain; its full sequence is Putative pterin-4-alpha-carbinolamine dehydratase (100 aa).

It belongs to the pterin-4-alpha-carbinolamine dehydratase family.

The catalysed reaction is (4aS,6R)-4a-hydroxy-L-erythro-5,6,7,8-tetrahydrobiopterin = (6R)-L-erythro-6,7-dihydrobiopterin + H2O. This is Putative pterin-4-alpha-carbinolamine dehydratase from Rhodopseudomonas palustris (strain ATCC BAA-98 / CGA009).